The following is a 530-amino-acid chain: Bifunctional purine biosynthesis protein PurH (530 aa).

An MGS-like domain is found at 1–149 (MASDFLPVHR…KNFARVAVAT (149 aa)).

This sequence belongs to the PurH family.

It catalyses the reaction (6R)-10-formyltetrahydrofolate + 5-amino-1-(5-phospho-beta-D-ribosyl)imidazole-4-carboxamide = 5-formamido-1-(5-phospho-D-ribosyl)imidazole-4-carboxamide + (6S)-5,6,7,8-tetrahydrofolate. The enzyme catalyses IMP + H2O = 5-formamido-1-(5-phospho-D-ribosyl)imidazole-4-carboxamide. It participates in purine metabolism; IMP biosynthesis via de novo pathway; 5-formamido-1-(5-phospho-D-ribosyl)imidazole-4-carboxamide from 5-amino-1-(5-phospho-D-ribosyl)imidazole-4-carboxamide (10-formyl THF route): step 1/1. Its pathway is purine metabolism; IMP biosynthesis via de novo pathway; IMP from 5-formamido-1-(5-phospho-D-ribosyl)imidazole-4-carboxamide: step 1/1. The sequence is that of Bifunctional purine biosynthesis protein PurH from Xylella fastidiosa (strain M12).